We begin with the raw amino-acid sequence, 479 residues long: Preferentially expressed antigen in melanoma-like protein 7 (479 aa).

One copy of the LRR 1; degenerate repeat lies at 96-124 (MGRLKKVDFRDAQHHASLDMQDEREGRDY). The LRR 2; degenerate repeat unit spans residues 179–203 (HLCCEKLEIGAVEVSKVRNVLKFLQ). The LRR 3; degenerate repeat unit spans residues 204 to 230 (PELIKELKLNTVGNLSKLAKFVPFIRK). The stretch at 231–265 (MRNLQKLMLVRTFGTRTFTQEEKQNISKIISLFCK) is one LRR 4; degenerate repeat. LRR repeat units lie at residues 266 to 291 (LSCL…LRCL), 292 to 323 (EAPL…SQLK), 324 to 347 (HLCL…LKRV), 348 to 375 (AANL…ALIK), and 376 to 400 (CTQL…FLHR).

It belongs to the PRAME family. As to quaternary structure, interacts with UHRF1. As to expression, seems to be specific to pluripotent tissues in the early embryo. Not detected in somatic tissues.

In terms of biological role, promotes maintenance and self-renewal of pluripotent embryonic stem cells (ESCs), downstream of LIF/STAT3. Maintains the pluripotency state of ESCs by repressing DNA methylation through the regulation of UHRF1 stability. Mediates the proteasomal degradation of UHRF1. Is required for the establishment of the blastocyst. This is Preferentially expressed antigen in melanoma-like protein 7 from Mus musculus (Mouse).